Consider the following 503-residue polypeptide: Cytochrome c lysine N-methyltransferase 1 (503 aa).

Positions 52 to 276 (SKFELLRIPR…EEAQVFISYA (225 aa)) constitute an SET domain. The SET-like stretch occupies residues 190–291 (NYEKLISTVY…VHFEQIYGFL (102 aa)).

It belongs to the class V-like SAM-binding methyltransferase superfamily.

It is found in the cytoplasm. Its subcellular location is the cytosol. It catalyses the reaction L-lysyl-[cytochrome c] + S-adenosyl-L-methionine = N(6)-methyl-L-lysyl-[cytochrome c] + S-adenosyl-L-homocysteine + H(+). Functionally, methyltransferase which mediates trimethylation of cytochrome c (CYC1). The polypeptide is Cytochrome c lysine N-methyltransferase 1 (CTM1) (Kluyveromyces lactis (strain ATCC 8585 / CBS 2359 / DSM 70799 / NBRC 1267 / NRRL Y-1140 / WM37) (Yeast)).